Here is a 347-residue protein sequence, read N- to C-terminus: Biotin synthase (347 aa).

The Radical SAM core domain occupies 54–273; the sequence is NHVETASLLS…IAVARIMMPK (220 aa). [4Fe-4S] cluster contacts are provided by cysteine 69, cysteine 73, and cysteine 76. The [2Fe-2S] cluster site is built by cysteine 113, cysteine 144, cysteine 204, and arginine 277.

Belongs to the radical SAM superfamily. Biotin synthase family. Homodimer. It depends on [4Fe-4S] cluster as a cofactor. The cofactor is [2Fe-2S] cluster.

It carries out the reaction (4R,5S)-dethiobiotin + (sulfur carrier)-SH + 2 reduced [2Fe-2S]-[ferredoxin] + 2 S-adenosyl-L-methionine = (sulfur carrier)-H + biotin + 2 5'-deoxyadenosine + 2 L-methionine + 2 oxidized [2Fe-2S]-[ferredoxin]. The protein operates within cofactor biosynthesis; biotin biosynthesis; biotin from 7,8-diaminononanoate: step 2/2. Catalyzes the conversion of dethiobiotin (DTB) to biotin by the insertion of a sulfur atom into dethiobiotin via a radical-based mechanism. The polypeptide is Biotin synthase (Afipia carboxidovorans (strain ATCC 49405 / DSM 1227 / KCTC 32145 / OM5) (Oligotropha carboxidovorans)).